The primary structure comprises 288 residues: Phosphatidylserine decarboxylase proenzyme (288 aa).

Residues D92, H149, and S254 each act as charge relay system; for autoendoproteolytic cleavage activity in the active site. S254 functions as the Schiff-base intermediate with substrate; via pyruvic acid; for decarboxylase activity in the catalytic mechanism. S254 is modified (pyruvic acid (Ser); by autocatalysis).

Belongs to the phosphatidylserine decarboxylase family. PSD-B subfamily. Prokaryotic type I sub-subfamily. As to quaternary structure, heterodimer of a large membrane-associated beta subunit and a small pyruvoyl-containing alpha subunit. It depends on pyruvate as a cofactor. Is synthesized initially as an inactive proenzyme. Formation of the active enzyme involves a self-maturation process in which the active site pyruvoyl group is generated from an internal serine residue via an autocatalytic post-translational modification. Two non-identical subunits are generated from the proenzyme in this reaction, and the pyruvate is formed at the N-terminus of the alpha chain, which is derived from the carboxyl end of the proenzyme. The autoendoproteolytic cleavage occurs by a canonical serine protease mechanism, in which the side chain hydroxyl group of the serine supplies its oxygen atom to form the C-terminus of the beta chain, while the remainder of the serine residue undergoes an oxidative deamination to produce ammonia and the pyruvoyl prosthetic group on the alpha chain. During this reaction, the Ser that is part of the protease active site of the proenzyme becomes the pyruvoyl prosthetic group, which constitutes an essential element of the active site of the mature decarboxylase.

It localises to the cell membrane. It catalyses the reaction a 1,2-diacyl-sn-glycero-3-phospho-L-serine + H(+) = a 1,2-diacyl-sn-glycero-3-phosphoethanolamine + CO2. It participates in phospholipid metabolism; phosphatidylethanolamine biosynthesis; phosphatidylethanolamine from CDP-diacylglycerol: step 2/2. Catalyzes the formation of phosphatidylethanolamine (PtdEtn) from phosphatidylserine (PtdSer). This chain is Phosphatidylserine decarboxylase proenzyme, found in Bordetella petrii (strain ATCC BAA-461 / DSM 12804 / CCUG 43448).